Consider the following 251-residue polypeptide: Small ribosomal subunit protein uS2B (251 aa).

An N-acetylserine modification is found at Ser2. Over residues 214–225 (AVEEASATGATE) the composition is skewed to low complexity. The disordered stretch occupies residues 214 to 251 (AVEEASATGATEEATEEATEETTEATEWAEDNTENATW). Residues 226–251 (EATEEATEETTEATEWAEDNTENATW) are compositionally biased toward acidic residues.

The protein belongs to the universal ribosomal protein uS2 family. As to quaternary structure, component of the small ribosomal subunit. Mature ribosomes consist of a small (40S) and a large (60S) subunit. The 40S subunit contains about 33 different proteins and 1 molecule of RNA (18S). The 60S subunit contains about 49 different proteins and 3 molecules of RNA (25S, 5.8S and 5S). Interacts with RPS21.

It localises to the cytoplasm. Required for the assembly and/or stability of the 40S ribosomal subunit. Required for the processing of the 20S rRNA-precursor to mature 18S rRNA in a late step of the maturation of 40S ribosomal subunits. This chain is Small ribosomal subunit protein uS2B, found in Vanderwaltozyma polyspora (strain ATCC 22028 / DSM 70294 / BCRC 21397 / CBS 2163 / NBRC 10782 / NRRL Y-8283 / UCD 57-17) (Kluyveromyces polysporus).